The chain runs to 375 residues: Secondary metabolism regulator laeA (375 aa).

Residues 15-26 (ASPNRNNYSYQG) show a composition bias toward polar residues. Disordered regions lie at residues 15 to 37 (ASPN…RSRQ) and 50 to 75 (QEPP…TSHY).

It belongs to the methyltransferase superfamily. LaeA methyltransferase family. As to quaternary structure, component of the heterotrimeric velvet complex composed of laeA, veA and velB; VeA acting as a bridging protein between laeA and velB.

The protein resides in the nucleus. It carries out the reaction L-methionyl-[protein] + S-adenosyl-L-methionine = S-methyl-L-methionyl-[protein] + S-adenosyl-L-homocysteine. Its function is as follows. Methyltransferase that performs automethylation. No other methyl-accepting substrate has been identified yet. Component of the velvet transcription factor complex that acts as a global regulator for secondary metabolite gene expression. Controls the expression of the citric acid, demethylkotanin, orlandin, asperrubrol, tensidol B, atromentin and JBIR8 gene clusters. Also represses the expression of genes related to the production of BMS-192548 and aspernigrin A. The sequence is that of Secondary metabolism regulator laeA from Aspergillus niger (strain ATCC 1015 / CBS 113.46 / FGSC A1144 / LSHB Ac4 / NCTC 3858a / NRRL 328 / USDA 3528.7).